The sequence spans 303 residues: Taste receptor type 2 member 13 (303 aa).

Topologically, residues M1–S7 are extracellular. Residues I8 to V28 traverse the membrane as a helical segment. The Cytoplasmic portion of the chain corresponds to L29–R55. The chain crosses the membrane as a helical span at residues I56 to F76. The Extracellular segment spans residues V77–M85. The helical transmembrane segment at I86–F106 threads the bilayer. Residues Y107–K128 are Cytoplasmic-facing. A helical transmembrane segment spans residues V129 to N149. Over M150–T184 the chain is Extracellular. 2 N-linked (GlcNAc...) asparagine glycosylation sites follow: N162 and N166. A helical membrane pass occupies residues M185–L205. The Cytoplasmic portion of the chain corresponds to Q206 to K232. A helical transmembrane segment spans residues I233–I253. Residues S254–V261 are Extracellular-facing. Residues I262–I282 traverse the membrane as a helical segment. At L283 to R303 the chain is on the cytoplasmic side.

This sequence belongs to the G-protein coupled receptor T2R family.

It localises to the membrane. Its function is as follows. Receptor that may play a role in the perception of bitterness and is gustducin-linked. May play a role in sensing the chemical composition of the gastrointestinal content. The activity of this receptor may stimulate alpha gustducin, mediate PLC-beta-2 activation and lead to the gating of TRPM5. The protein is Taste receptor type 2 member 13 (TAS2R13) of Gorilla gorilla gorilla (Western lowland gorilla).